A 344-amino-acid polypeptide reads, in one-letter code: Meiotic expression up-regulated protein 26 (344 aa).

The protein localises to the nucleus. The protein is Meiotic expression up-regulated protein 26 (meu26) of Schizosaccharomyces pombe (strain 972 / ATCC 24843) (Fission yeast).